The sequence spans 360 residues: Isocitrate dehydrogenase [NAD] regulatory subunit B, mitochondrial (360 aa).

Residues 1-113 (MLGRLRTVVK…MELRKALDLY (113 aa)) constitute a mitochondrion transit peptide. Residues S101, N103, R107, and R140 each coordinate substrate. A Mg(2+)-binding site is contributed by D227. NADP(+)-binding positions include 284 to 290 (HHVAADI) and N297.

It belongs to the isocitrate and isopropylmalate dehydrogenases family. Heterooligomer of catalytic and regulatory subunits. Requires Mg(2+) as cofactor. Mn(2+) serves as cofactor.

It is found in the mitochondrion. It carries out the reaction D-threo-isocitrate + NAD(+) = 2-oxoglutarate + CO2 + NADH. Performs an essential role in the oxidative function of the citric acid cycle. This chain is Isocitrate dehydrogenase [NAD] regulatory subunit B, mitochondrial (idhB), found in Dictyostelium discoideum (Social amoeba).